The sequence spans 211 residues: FMN-dependent NADH:quinone oxidoreductase (211 aa).

FMN is bound by residues Ser10, 16–18, and 138–141; these read STS and TQGG.

The protein belongs to the azoreductase type 1 family. In terms of assembly, homodimer. It depends on FMN as a cofactor.

The enzyme catalyses 2 a quinone + NADH + H(+) = 2 a 1,4-benzosemiquinone + NAD(+). It carries out the reaction N,N-dimethyl-1,4-phenylenediamine + anthranilate + 2 NAD(+) = 2-(4-dimethylaminophenyl)diazenylbenzoate + 2 NADH + 2 H(+). Quinone reductase that provides resistance to thiol-specific stress caused by electrophilic quinones. In terms of biological role, also exhibits azoreductase activity. Catalyzes the reductive cleavage of the azo bond in aromatic azo compounds to the corresponding amines. This chain is FMN-dependent NADH:quinone oxidoreductase, found in Frankia alni (strain DSM 45986 / CECT 9034 / ACN14a).